Consider the following 33-residue polypeptide: Sucrose-6-phosphate hydrolase (33 aa).

Residue proline 15–glutamate 18 coordinates substrate. The active site involves glutamate 18.

Belongs to the glycosyl hydrolase 32 family.

The catalysed reaction is Hydrolysis of terminal non-reducing beta-D-fructofuranoside residues in beta-D-fructofuranosides.. It participates in glycan biosynthesis; sucrose metabolism. In Fusobacterium mortiferum, this protein is Sucrose-6-phosphate hydrolase.